The following is a 911-amino-acid chain: Isoleucine--tRNA ligase (911 aa).

The short motif at 57-67 is the 'HIGH' region element; sequence PYANGHIHIGH. E564 is an L-isoleucyl-5'-AMP binding site. Residues 605–609 carry the 'KMSKS' region motif; that stretch reads KMSKS. K608 is an ATP binding site. Residues C887, C890, C902, and C905 each coordinate Zn(2+).

It belongs to the class-I aminoacyl-tRNA synthetase family. IleS type 1 subfamily. In terms of assembly, monomer. Zn(2+) is required as a cofactor.

Its subcellular location is the cytoplasm. It catalyses the reaction tRNA(Ile) + L-isoleucine + ATP = L-isoleucyl-tRNA(Ile) + AMP + diphosphate. Its function is as follows. Catalyzes the attachment of isoleucine to tRNA(Ile). As IleRS can inadvertently accommodate and process structurally similar amino acids such as valine, to avoid such errors it has two additional distinct tRNA(Ile)-dependent editing activities. One activity is designated as 'pretransfer' editing and involves the hydrolysis of activated Val-AMP. The other activity is designated 'posttransfer' editing and involves deacylation of mischarged Val-tRNA(Ile). The polypeptide is Isoleucine--tRNA ligase (Nautilia profundicola (strain ATCC BAA-1463 / DSM 18972 / AmH)).